A 246-amino-acid polypeptide reads, in one-letter code: Bacteriorhodopsin-II-like protein (246 aa).

Transmembrane regions (helical) follow at residues 7-27 (EATWLWIGTIGMVLGTVYFAV), 45-65 (TLIPAIAAAAYLAMATGLGVI), 82-102 (YADWLLTTPLLIIDLALVAGA), 107-127 (LYKLIIIDAIMILGGLAGSMM), 135-155 (IVWWAVSTAAFIILLYYLLGE), 182-202 (WALYPIVWILGTGGGFGIIAV), and 205-225 (EIMLYVMLDIGTKIGFGAVLL). K217 carries the N6-(retinylidene)lysine modification.

Belongs to the archaeal/bacterial/fungal opsin family. In terms of processing, the covalent binding of retinal to the apoprotein, bacterioopsin, generates bacteriorhodopsin.

The protein resides in the cell membrane. Its function is as follows. Has no proton-pumping activity but is potentially capable of functioning as a sensory SRII-like protein. The chromophore contains 36.5% all-trans-, 7.6% 11-cis- and 56.4% 13-cis-retinal in the dark and 30.1% 11-cis- and 47.7% 13-cis-retinal upon illumination with &gt;460 nm light. This chain is Bacteriorhodopsin-II-like protein (bop2), found in Haloquadratum walsbyi (strain DSM 16790 / HBSQ001).